Here is a 349-residue protein sequence, read N- to C-terminus: Early nodulin-like protein 2 (349 aa).

A signal peptide spans 1 to 28; sequence MTFLKMKSLSFFFTILLSLSTLFTISNA. The Phytocyanin domain maps to 29–130; that stretch reads RKFNVGGSGA…GQKLNVVVIS (102 aa). C84 and C118 form a disulfide bridge. A disordered region spans residues 136–330; the sequence is TAQSPHAAAP…GQKKSSANGM (195 aa). Low complexity-rich tracts occupy residues 145 to 201 and 224 to 234; these read PGSS…SPPG and TSPVSPSSAPM. The span at 249–260 shows a compositional bias: polar residues; the sequence is IPPSSAPMTSPP. Residues 263 to 312 are compositionally biased toward low complexity; it reads MAPKSSSPVSNSPTVSPSLAPGGSTSSSPSDSPSGSAMGPSGDGPSAAGD. A lipid anchor (GPI-anchor amidated serine) is attached at S325. Residues 326-349 constitute a propeptide, removed in mature form; the sequence is SANGMTVMSITTVLSLVLTIFLSA.

This sequence belongs to the early nodulin-like (ENODL) family. In terms of tissue distribution, mostly expressed in leaves and roots, and, to a lower extent, in seedlings, stems and flowers, but barely in seeds.

It is found in the cell membrane. In terms of biological role, may act as a carbohydrate transporter. The sequence is that of Early nodulin-like protein 2 from Arabidopsis thaliana (Mouse-ear cress).